The sequence spans 248 residues: MATEAKYNRILIKLSGEALAGEGEFGIDTNKAHSLAEEIKEVHDLGVEIALVVGGGNIIRGTNLAKAGIDRATADYMGMLATIQNALALQDACEKKGLYTRVQSAIEINSIAESYIRRRAVRHLEKRRIVIFAGGTGNPYFTTDTTASLRAVEVGCDVILKATKVDGVYTADPKKDNGAKRYSQISFMESINRRLKVMDSTALSLCMENNMSIIVFDIFKRGNLKDLVTGKNIGTLISNSEDIQIDGK.

13–16 (KLSG) is an ATP binding site. Glycine 55 serves as a coordination point for UMP. ATP is bound by residues glycine 56 and arginine 60. Residues aspartate 75 and 136–143 (TGNPYFTT) contribute to the UMP site. ATP contacts are provided by threonine 163, tyrosine 169, and aspartate 172.

This sequence belongs to the UMP kinase family. In terms of assembly, homohexamer.

The protein resides in the cytoplasm. It carries out the reaction UMP + ATP = UDP + ADP. Its pathway is pyrimidine metabolism; CTP biosynthesis via de novo pathway; UDP from UMP (UMPK route): step 1/1. Inhibited by UTP. Catalyzes the reversible phosphorylation of UMP to UDP. This chain is Uridylate kinase, found in Leptospira interrogans serogroup Icterohaemorrhagiae serovar copenhageni (strain Fiocruz L1-130).